Here is a 406-residue protein sequence, read N- to C-terminus: Riboflavin biosynthesis protein RibBA (406 aa).

The tract at residues 1–209 (MSEREEFKFN…IADLIKYRLR (209 aa)) is DHBP synthase. D-ribulose 5-phosphate-binding positions include 33-34 (RE), D38, 148-152 (RAGHT), and E172. E34 is a Mg(2+) binding site. H151 is a binding site for Mg(2+). The segment at 210–406 (RETLVEKVAS…VKKDKLGHMF (197 aa)) is GTP cyclohydrolase II. A GTP-binding site is contributed by 260–264 (RVHSE). 3 residues coordinate Zn(2+): C265, C276, and C278. GTP contacts are provided by residues Q281, 304–306 (EGR), and T326. The active-site Proton acceptor; for GTP cyclohydrolase activity is the D338. The active-site Nucleophile; for GTP cyclohydrolase activity is R340. Residues T361 and K366 each coordinate GTP.

This sequence in the N-terminal section; belongs to the DHBP synthase family. In the C-terminal section; belongs to the GTP cyclohydrolase II family. Requires Mg(2+) as cofactor. Mn(2+) is required as a cofactor. The cofactor is Zn(2+).

It catalyses the reaction D-ribulose 5-phosphate = (2S)-2-hydroxy-3-oxobutyl phosphate + formate + H(+). It carries out the reaction GTP + 4 H2O = 2,5-diamino-6-hydroxy-4-(5-phosphoribosylamino)-pyrimidine + formate + 2 phosphate + 3 H(+). Its pathway is cofactor biosynthesis; riboflavin biosynthesis; 2-hydroxy-3-oxobutyl phosphate from D-ribulose 5-phosphate: step 1/1. The protein operates within cofactor biosynthesis; riboflavin biosynthesis; 5-amino-6-(D-ribitylamino)uracil from GTP: step 1/4. In terms of biological role, catalyzes the conversion of D-ribulose 5-phosphate to formate and 3,4-dihydroxy-2-butanone 4-phosphate. Catalyzes the conversion of GTP to 2,5-diamino-6-ribosylamino-4(3H)-pyrimidinone 5'-phosphate (DARP), formate and pyrophosphate. This chain is Riboflavin biosynthesis protein RibBA, found in Aquifex aeolicus (strain VF5).